The primary structure comprises 227 residues: MESFEKLETLLGYSFKNKELLIEALSHPSLRQYHEYKYDKDYERLEFLGDAVLNLLITEILFKNFENYKEGNLAKIRSYLVCKETICIVGTKLALKDYIIMTHGEEVAGGRDNPNNIENVTEALIAAIYLDSNIEITHNIIEKLWAEFMKVQNLTDYDPKTALQEWAQASSNHLPIYRLIKREGAAHSSIFTVLVKVKDYEQICTGYSIKEAEKKAARCLLHRLKND.

An RNase III domain is found at 4–133 (FEKLETLLGY…LIAAIYLDSN (130 aa)). E46 serves as a coordination point for Mg(2+). The active site involves D50. Residues N119 and E122 each contribute to the Mg(2+) site. E122 is an active-site residue. One can recognise a DRBM domain in the interval 158–226 (DPKTALQEWA…ARCLLHRLKN (69 aa)).

Belongs to the ribonuclease III family. In terms of assembly, homodimer. Requires Mg(2+) as cofactor.

Its subcellular location is the cytoplasm. It carries out the reaction Endonucleolytic cleavage to 5'-phosphomonoester.. Digests double-stranded RNA. Involved in the processing of primary rRNA transcript to yield the immediate precursors to the large and small rRNAs (23S and 16S). Processes some mRNAs, and tRNAs when they are encoded in the rRNA operon. Processes pre-crRNA and tracrRNA of type II CRISPR loci if present in the organism. This is Ribonuclease 3 from Rickettsia typhi (strain ATCC VR-144 / Wilmington).